A 155-amino-acid polypeptide reads, in one-letter code: Small ribosomal subunit protein uS7cz/uS7cy (155 aa).

It belongs to the universal ribosomal protein uS7 family. In terms of assembly, part of the 30S ribosomal subunit.

Its subcellular location is the plastid. It is found in the chloroplast. Its function is as follows. One of the primary rRNA binding proteins, it binds directly to 16S rRNA where it nucleates assembly of the head domain of the 30S subunit. The chain is Small ribosomal subunit protein uS7cz/uS7cy (rps7-A) from Calycanthus floridus var. glaucus (Eastern sweetshrub).